We begin with the raw amino-acid sequence, 380 residues long: Cytochrome b (380 aa).

4 helical membrane passes run 34 to 54 (FGSL…LLAM), 78 to 99 (WLIR…YLHI), 114 to 134 (WNTG…GYVL), and 179 to 199 (FFAL…IHLT). Heme b-binding residues include H84 and H98. Heme b contacts are provided by H183 and H197. A ubiquinone is bound at residue H202. The next 4 membrane-spanning stretches (helical) occupy residues 227–247 (LKDI…ALFS), 289–309 (LGGV…PFLH), 321–341 (LSQL…WVGS), and 348–368 (FIII…ILFP).

This sequence belongs to the cytochrome b family. The cytochrome bc1 complex contains 11 subunits: 3 respiratory subunits (MT-CYB, CYC1 and UQCRFS1), 2 core proteins (UQCRC1 and UQCRC2) and 6 low-molecular weight proteins (UQCRH/QCR6, UQCRB/QCR7, UQCRQ/QCR8, UQCR10/QCR9, UQCR11/QCR10 and a cleavage product of UQCRFS1). This cytochrome bc1 complex then forms a dimer. It depends on heme b as a cofactor.

The protein resides in the mitochondrion inner membrane. In terms of biological role, component of the ubiquinol-cytochrome c reductase complex (complex III or cytochrome b-c1 complex) that is part of the mitochondrial respiratory chain. The b-c1 complex mediates electron transfer from ubiquinol to cytochrome c. Contributes to the generation of a proton gradient across the mitochondrial membrane that is then used for ATP synthesis. This is Cytochrome b (MT-CYB) from Pterodroma hypoleuca (Bonin petrel).